The primary structure comprises 248 residues: 3-deoxy-manno-octulosonate cytidylyltransferase (248 aa).

This sequence belongs to the KdsB family.

Its subcellular location is the cytoplasm. The enzyme catalyses 3-deoxy-alpha-D-manno-oct-2-ulosonate + CTP = CMP-3-deoxy-beta-D-manno-octulosonate + diphosphate. It functions in the pathway nucleotide-sugar biosynthesis; CMP-3-deoxy-D-manno-octulosonate biosynthesis; CMP-3-deoxy-D-manno-octulosonate from 3-deoxy-D-manno-octulosonate and CTP: step 1/1. Its pathway is bacterial outer membrane biogenesis; lipopolysaccharide biosynthesis. Functionally, activates KDO (a required 8-carbon sugar) for incorporation into bacterial lipopolysaccharide in Gram-negative bacteria. This is 3-deoxy-manno-octulosonate cytidylyltransferase from Escherichia coli O127:H6 (strain E2348/69 / EPEC).